Consider the following 834-residue polypeptide: RNA-binding protein 12B-B (834 aa).

Residues 154–229 (PYLFLRGLPY…RFIEVMQGSE (76 aa)) enclose the RRM 1 domain. A disordered region spans residues 237-277 (GTATEGGDTPRMRSEEHSPSRRINGRHFRKRSHSKSPRARS). Residues 244-255 (DTPRMRSEEHSP) are compositionally biased toward basic and acidic residues. A compositionally biased stretch (basic residues) spans 259-277 (INGRHFRKRSHSKSPRARS). RRM domains follow at residues 283 to 359 (FYVH…PVSR) and 401 to 478 (LCIY…LISE). Disordered regions lie at residues 546 to 572 (GYFR…PWEE) and 621 to 643 (HFRR…RSRE). Positions 550–572 (QSDRCSPEDFRHSPEDYRHPWEE) are enriched in basic and acidic residues. Residue S701 is modified to Phosphoserine. The RRM 4 domain maps to 758-834 (IRVMISNLPF…GPRKVKLSLL (77 aa)).

The protein is RNA-binding protein 12B-B (Rbm12b2) of Mus musculus (Mouse).